The primary structure comprises 199 residues: N-(5'-phosphoribosyl)anthranilate isomerase (199 aa).

This sequence belongs to the TrpF family.

The catalysed reaction is N-(5-phospho-beta-D-ribosyl)anthranilate = 1-(2-carboxyphenylamino)-1-deoxy-D-ribulose 5-phosphate. It participates in amino-acid biosynthesis; L-tryptophan biosynthesis; L-tryptophan from chorismate: step 3/5. This Streptococcus pneumoniae (strain Taiwan19F-14) protein is N-(5'-phosphoribosyl)anthranilate isomerase.